We begin with the raw amino-acid sequence, 238 residues long: Ribonuclease PH (238 aa).

Phosphate contacts are provided by residues Arg86 and 124–126; that span reads GTR.

Belongs to the RNase PH family. Homohexameric ring arranged as a trimer of dimers.

It carries out the reaction tRNA(n+1) + phosphate = tRNA(n) + a ribonucleoside 5'-diphosphate. Its function is as follows. Phosphorolytic 3'-5' exoribonuclease that plays an important role in tRNA 3'-end maturation. Removes nucleotide residues following the 3'-CCA terminus of tRNAs; can also add nucleotides to the ends of RNA molecules by using nucleoside diphosphates as substrates, but this may not be physiologically important. Probably plays a role in initiation of 16S rRNA degradation (leading to ribosome degradation) during starvation. The sequence is that of Ribonuclease PH from Actinobacillus succinogenes (strain ATCC 55618 / DSM 22257 / CCUG 43843 / 130Z).